A 455-amino-acid chain; its full sequence is Kynurenine--oxoglutarate transaminase 3 (455 aa).

Glycine 71 provides a ligand contact to substrate. An N6-acetyllysine; alternate modification is found at lysine 116. Lysine 116 is modified (N6-succinyllysine; alternate). Asparagine 218 contacts substrate. Lysine 280 carries the N6-(pyridoxal phosphate)lysine modification. Arginine 430 contacts substrate.

The protein belongs to the class-I pyridoxal-phosphate-dependent aminotransferase family. Homodimer. It depends on pyridoxal 5'-phosphate as a cofactor.

The enzyme catalyses L-kynurenine + 2-oxoglutarate = kynurenate + L-glutamate + H2O. The catalysed reaction is L-kynurenine + glyoxylate = kynurenate + glycine + H2O. It catalyses the reaction 3-hydroxy-L-kynurenine + glyoxylate = xanthurenate + glycine + H2O. It carries out the reaction an S-substituted L-cysteine + H2O = a thiol + pyruvate + NH4(+). It participates in amino-acid degradation; L-kynurenine degradation; kynurenate from L-kynurenine: step 1/2. Catalyzes the irreversible transamination of the L-tryptophan metabolite L-kynurenine to form kynurenic acid (KA), an intermediate in the tryptophan catabolic pathway which is also a broad spectrum antagonist of the three ionotropic excitatory amino acid receptors among others. May catalyze the beta-elimination of S-conjugates and Se-conjugates of L-(seleno)cysteine, resulting in the cleavage of the C-S or C-Se bond. Has transaminase activity towards L-kynurenine, tryptophan, phenylalanine, serine, cysteine, methionine, histidine, glutamine and asparagine with glyoxylate as an amino group acceptor (in vitro). Has lower activity with 2-oxoglutarate as amino group acceptor (in vitro). This Bos taurus (Bovine) protein is Kynurenine--oxoglutarate transaminase 3.